The chain runs to 91 residues: Putative defensin-like protein 221 (91 aa).

The first 19 residues, 1–19 (MKTLFFFLTIAVLVSSCTS), serve as a signal peptide directing secretion. Cystine bridges form between C61/C78, C64/C83, and C68/C85.

Belongs to the DEFL family.

The protein localises to the secreted. The sequence is that of Putative defensin-like protein 221 from Arabidopsis thaliana (Mouse-ear cress).